Here is a 309-residue protein sequence, read N- to C-terminus: Dioxygenase af480 (309 aa).

Residues histidine 153, aspartate 155, and histidine 228 each contribute to the Fe cation site.

This sequence belongs to the PhyH family. Fe cation serves as cofactor.

The catalysed reaction is 5-dehydro-6-demethoxyfumagillol + 2-oxoglutarate + O2 = 5-dehydro-6-demethoxy-6-hydroxyfumagillol + succinate + CO2. It functions in the pathway secondary metabolite biosynthesis; terpenoid biosynthesis. Dioxygenase; part of the gene cluster that mediates the biosynthesis of fumagillin, a meroterpenoid that has numerous biological activities including irreversible inhibition of human type 2 methionine aminopeptidase (METAP2). Within the pathway, the dioxygenase af480 acts as a 5-dehydro-6-demethoxyfumagillol dioxygenase that hydroylates 5-keto-demethoxyfumagillol at position C-6. The pathway begins with the conversion of farnesyl pyrophosphate (FPP) to beta-trans-bergamotene by the membrane-bound beta-trans-bergamotene synthase af520. The multifunctional cytochrome P450 monooxygenase af510 then converts beta-trans-bergamotene into 5-keto-demethoxyfumagillol via several oxydation steps. 5-keto-demethoxyfumagillol is then subjected to successive C-6 hydroxylation and O-methylation by the dioxygenase af480 and O-methyltransferase af390-400, respectively, to yield 5-keto-fumagillol, which is then stereoselectively reduced by the keto-reductase af490 to 5R-hydroxy-seco-sesquiterpene. The next step is the polyketide transferase af380-catalyzed transfer of a dodecapentaenoyl group synthesized by the polyketide synthase af370 onto 5R-hydroxy-seco-sesquiterpene which leads to the production of prefumagillin. Finally, oxidative cleavage by the monooxygenase af470 converts prefumagillin to fumagillin. This is Dioxygenase af480 from Aspergillus fumigatus (strain ATCC MYA-4609 / CBS 101355 / FGSC A1100 / Af293) (Neosartorya fumigata).